The sequence spans 372 residues: NAD(P)H-quinone oxidoreductase subunit 1 (372 aa).

8 consecutive transmembrane segments (helical) span residues 27–47 (AIWMPLPMILMLIGATVGVLV), 97–117 (WLFTLGPIIVVIPVFLSFLIV), 128–148 (VGMGVFLWIALSSIQPIGLLM), 166–186 (AAQSISYEIPLALAVLAIAMM), 204–224 (ILGWNIWRQPIGFLIFWIAAL), 249–269 (YSGMKFGLFYLGSYVNLILSS), 308–328 (SLGITMTVFKAYLLVFVAILL), and 351–371 (VGLVNLLLTAALKLAFPFAFG).

This sequence belongs to the complex I subunit 1 family. As to quaternary structure, NDH-1 is composed of at least 11 different subunits.

It is found in the cellular thylakoid membrane. It catalyses the reaction a plastoquinone + NADH + (n+1) H(+)(in) = a plastoquinol + NAD(+) + n H(+)(out). The catalysed reaction is a plastoquinone + NADPH + (n+1) H(+)(in) = a plastoquinol + NADP(+) + n H(+)(out). Functionally, NDH-1 shuttles electrons from an unknown electron donor, via FMN and iron-sulfur (Fe-S) centers, to quinones in the respiratory and/or the photosynthetic chain. The immediate electron acceptor for the enzyme in this species is believed to be plastoquinone. Couples the redox reaction to proton translocation, and thus conserves the redox energy in a proton gradient. The sequence is that of NAD(P)H-quinone oxidoreductase subunit 1 from Nostoc punctiforme (strain ATCC 29133 / PCC 73102).